Reading from the N-terminus, the 813-residue chain is Homeobox-leucine zipper protein ROC4 (813 aa).

Residues 62 to 112 form a disordered region; that stretch reads EVENEMSRSGSDHLDVVSCGDAGGGGGDDDDDEDAEHGNPPKRKKRYHRHT. Residues 101–112 show a composition bias toward basic residues; it reads PPKRKKRYHRHT. The segment at residues 104–163 is a DNA-binding region (homeobox); that stretch reads RKKRYHRHTPQQIQELEAMFKECPHPDEKQRAELSKRLGLEPRQVKFWFQNRRTQMKMQL. A coiled-coil region spans residues 152–191; the sequence is FQNRRTQMKMQLERHENSLLKQENDKLRSENLSIREATSN. One can recognise an START domain in the interval 306–559; that stretch reads AGIDKSLFLE…LQRQCECLAL (254 aa).

The protein belongs to the HD-ZIP homeobox family. Class IV subfamily.

The protein localises to the nucleus. In terms of biological role, probable transcription factor. The chain is Homeobox-leucine zipper protein ROC4 (ROC4) from Oryza sativa subsp. japonica (Rice).